We begin with the raw amino-acid sequence, 193 residues long: AP-3 complex subunit sigma-1 (193 aa).

Residue Ser191 is modified to Phosphoserine.

It belongs to the adaptor complexes small subunit family. As to quaternary structure, adaptor protein complex 3 (AP-3) is a heterotetramer composed of two large adaptins (delta-type subunit AP3D1 and beta-type subunit AP3B1 or AP3B2), a medium adaptin (mu-type subunit AP3M1 or AP3M2) and a small adaptin (sigma-type subunit APS1 or AP3S2). Interacts with AGAP1. AP-3 associates with the BLOC-1 complex.

The protein localises to the golgi apparatus. It localises to the cytoplasmic vesicle membrane. In terms of biological role, part of the AP-3 complex, an adaptor-related complex which is not clathrin-associated. The complex is associated with the Golgi region as well as more peripheral structures. It facilitates the budding of vesicles from the Golgi membrane and may be directly involved in trafficking to lysosomes. In concert with the BLOC-1 complex, AP-3 is required to target cargos into vesicles assembled at cell bodies for delivery into neurites and nerve terminals. The polypeptide is AP-3 complex subunit sigma-1 (AP3S1) (Bos taurus (Bovine)).